Reading from the N-terminus, the 471-residue chain is GTPase Der (471 aa).

EngA-type G domains are found at residues 3–168 (PIVA…PDLS) and 178–353 (VRVA…ANHA). Residues 9-16 (GRPNVGKS), 56-60 (DTGGI), 120-123 (NKVE), 184-191 (GRPNVGKS), 231-235 (DTAGM), and 296-299 (NKWD) contribute to the GTP site. A KH-like domain is found at 354 to 438 (RRISTRELND…PINLYFRTRE (85 aa)).

The protein belongs to the TRAFAC class TrmE-Era-EngA-EngB-Septin-like GTPase superfamily. EngA (Der) GTPase family. In terms of assembly, associates with the 50S ribosomal subunit.

GTPase that plays an essential role in the late steps of ribosome biogenesis. In Symbiobacterium thermophilum (strain DSM 24528 / JCM 14929 / IAM 14863 / T), this protein is GTPase Der.